Reading from the N-terminus, the 106-residue chain is Replication restart protein PriB (106 aa).

The 100-residue stretch at 4-103 (VNRLVLSGTV…LHAEQIELID (100 aa)) folds into the SSB domain.

This sequence belongs to the PriB family. Homodimer. Interacts with PriA and DnaT. Component of the replication restart primosome. Primosome assembly occurs via a 'hand-off' mechanism. PriA binds to replication forks, subsequently PriB then DnaT bind; DnaT then displaces ssDNA to generate the helicase loading substrate.

In terms of biological role, involved in the restart of stalled replication forks, which reloads the replicative helicase on sites other than the origin of replication; the PriA-PriB pathway is the major replication restart pathway. During primosome assembly it facilitates complex formation between PriA and DnaT on DNA; stabilizes PriA on DNA. Stimulates the DNA unwinding activity of PriA helicase. The protein is Replication restart protein PriB of Pectobacterium carotovorum subsp. carotovorum (strain PC1).